The chain runs to 514 residues: Ubiquitin carboxyl-terminal hydrolase 22 (514 aa).

A UBP-type zinc finger spans residues P10–M127. Zn(2+) is bound by residues C12, H14, C52, C55, C65, C68, C73, H78, H82, H88, C101, and C104. The residue at position 118 (K118) is an N6-acetyllysine. The residue at position 136 (T136) is a Phosphothreonine. One can recognise a USP domain in the interval R165–Q509. C174 serves as the catalytic Nucleophile. S226 is subject to Phosphoserine. The active-site Proton acceptor is the H468.

Belongs to the peptidase C19 family. UBP8 subfamily. Component of some SAGA transcription coactivator-HAT complexes, at least composed of ATXN7, ATXN7L3, ENY2, GCN5L2, SUPT3H, TAF10, TRRAP and USP22. Within the SAGA complex, ATXN7L3, ENY2 and USP22 form a subcomplex required for histone deubiquitination. Interacts directly with ATXN7L3; leading to its recruitment to the SAGA complex. Interacts with ATXN7L3 and weakly with ATXN7L3B. Interacts with MED1. Post-translationally, phosphorylated in G2/M phase, but not in G1 phase by CDK1. Ubiquitinated and subsequently degraded in a CDC20-dependent manner.

Its subcellular location is the nucleus. It localises to the cytoplasm. The enzyme catalyses Thiol-dependent hydrolysis of ester, thioester, amide, peptide and isopeptide bonds formed by the C-terminal Gly of ubiquitin (a 76-residue protein attached to proteins as an intracellular targeting signal).. Deubiquitinase that plays a role in several cellular processes including transcriptional regulation, cell cycle progression or innate immunity. As part of the transcription regulatory histone acetylation (HAT) complex SAGA, catalyzes the deubiquitination of both histones H2A and H2B, thereby acting as a transcriptional coactivator. Recruited to specific gene promoters by activators such as MYC, where it is required for transcription. Facilitates cell-cycle progression by stabilizing CCNB1 and antagonizing its proteasome-mediated degradation in a cell cycle-specific manner. Modulates cell cycle progression and apoptosis also by antagonizing TP53 transcriptional activation through deacetylase SIRT1 stabilization. Plays multiple roles in immunity and inflammation. Participates in antiviral response by deubiquitinating the importin KPNA2, leading to IRF3 nuclear translocation and subsequent type I interferon production. Acts as a central regulator of type III IFN signaling by negatively regulating STING1 activation and ubiquitination. Inhibits NLRP3 inflammasome activation by promoting NLRP3 degradation through ATG5-dependent autophagy. Deubiquitinates CD274 to induce its stabilization and thereby participates in maintenance of immune tolerance to self. Controls necroptotic cell death by regulating RIPK3 phosphorylation and ubiquitination. During bacterial infection, promotes pro-inflammatory response by targeting TRAF6 and removing its 'Lys-48'-linked polyubiquitination. This chain is Ubiquitin carboxyl-terminal hydrolase 22 (USP22), found in Bos taurus (Bovine).